The sequence spans 523 residues: Membrane protein PTM1 (523 aa).

A signal peptide spans 1-26 (MRVYQFCRPFQLFTYFLCYLLVFVKA). Residues 27-197 (NKEKISQKNY…LAGTEINKLP (171 aa)) lie on the Lumenal side of the membrane. Residue Asn-132 is glycosylated (N-linked (GlcNAc...) asparagine). A helical transmembrane segment spans residues 198 to 218 (LYGLLAVAYVVAMALYSFAFW). The Cytoplasmic segment spans residues 219–230 (KHKHELLPLQKY). Residues 231 to 251 (LLAFFVFLTAETIFVWAYYDL) traverse the membrane as a helical segment. Residues 252–265 (KNEKGDTAGIKVYM) lie on the Lumenal side of the membrane. Residues 266 to 286 (VFLSILTAGKVTFSFFLLLII) traverse the membrane as a helical segment. Residues 287-304 (ALGYGIVYPKLNKTLMRR) are Cytoplasmic-facing. The chain crosses the membrane as a helical span at residues 305-325 (CQMYGALTYAICIGFLIQSYL). Residues 326–333 (TDMEAPSP) lie on the Lumenal side of the membrane. The chain crosses the membrane as a helical span at residues 334 to 354 (LILITLIPMALALIIFYYMII). Residues 355–381 (RSMTKTVIYLKEQRQIVKLNMYKKLLY) are Cytoplasmic-facing. The helical transmembrane segment at 382-402 (IIYASFLSVLAGSIVSSFIYV) threads the bilayer. Topologically, residues 403-417 (GMNTIDMIEKNWRSR) are lumenal. The chain crosses the membrane as a helical span at residues 418–438 (FFVTDFWPTLVYFIVFVTIAF). The Cytoplasmic segment spans residues 439–523 (LWRPTDTSYM…HGPVSPSPTK (85 aa)). Phosphoserine is present on Ser-480. A phosphothreonine mark is found at Thr-483 and Thr-498. Positions 483–523 (TGERGIDEDDLNLNFTDDEEGHDNVNNHSQGHGPVSPSPTK) are disordered. Acidic residues predominate over residues 488 to 503 (IDEDDLNLNFTDDEEG).

It belongs to the LU7TM family.

The protein localises to the golgi apparatus membrane. It is found in the early endosome membrane. In Saccharomyces cerevisiae (strain YJM789) (Baker's yeast), this protein is Membrane protein PTM1 (PTM1).